We begin with the raw amino-acid sequence, 248 residues long: Probable transcriptional regulatory protein RPA1097 (248 aa).

The interval 1 to 21 is disordered; sequence MAGHSQFKNIMHRKGRQDAQR.

The protein belongs to the TACO1 family.

It localises to the cytoplasm. In Rhodopseudomonas palustris (strain ATCC BAA-98 / CGA009), this protein is Probable transcriptional regulatory protein RPA1097.